The sequence spans 358 residues: tRNA pseudouridine synthase D (358 aa).

Asp-84 (nucleophile) is an active-site residue. Positions 161 to 312 constitute a TRUD domain; the sequence is GTPNYFGPQR…RRSLRLMVAD (152 aa).

This sequence belongs to the pseudouridine synthase TruD family.

It catalyses the reaction uridine(13) in tRNA = pseudouridine(13) in tRNA. In terms of biological role, responsible for synthesis of pseudouridine from uracil-13 in transfer RNAs. The chain is tRNA pseudouridine synthase D from Nitrosococcus oceani (strain ATCC 19707 / BCRC 17464 / JCM 30415 / NCIMB 11848 / C-107).